A 99-amino-acid chain; its full sequence is Acylphosphatase-2 (99 aa).

Position 2 is an N-acetylserine (serine 2). The 91-residue stretch at 9 to 99 folds into the Acylphosphatase-like domain; the sequence is SVDYEVFGRV…LEYSNFSIRY (91 aa). Residues arginine 24 and asparagine 42 contribute to the active site. Phosphoserine is present on serine 93.

It belongs to the acylphosphatase family.

It carries out the reaction an acyl phosphate + H2O = a carboxylate + phosphate + H(+). Its physiological role is not yet clear. This is Acylphosphatase-2 (ACYP2) from Cavia porcellus (Guinea pig).